The chain runs to 269 residues: Undecaprenyl-diphosphatase (269 aa).

Helical transmembrane passes span 42–62 (WDTF…ALYF), 83–103 (LTVL…HGVI), 110–130 (PYLP…LLVV), 142–162 (GMAL…LSLL), 186–206 (AEFS…LDLL), 219–239 (AIAI…KFLI), and 247–267 (FTPF…LIYI).

Belongs to the UppP family.

The protein resides in the cell inner membrane. It carries out the reaction di-trans,octa-cis-undecaprenyl diphosphate + H2O = di-trans,octa-cis-undecaprenyl phosphate + phosphate + H(+). Functionally, catalyzes the dephosphorylation of undecaprenyl diphosphate (UPP). Confers resistance to bacitracin. This is Undecaprenyl-diphosphatase from Caulobacter sp. (strain K31).